A 699-amino-acid chain; its full sequence is D-(-)-3-hydroxybutyrate oligomer hydrolase (699 aa).

The signal sequence occupies residues 1 to 33 (MTAIRGGSRRAPGLALALLGGVLLGACHGDENA). Residue Ser-311 is the Charge relay system of the active site.

Belongs to the D-(-)-3-hydroxybutyrate oligomer hydrolase family.

It localises to the secreted. It carries out the reaction (3R)-hydroxybutanoate dimer + H2O = 2 (R)-3-hydroxybutanoate + H(+). The protein operates within lipid metabolism; butanoate metabolism. In terms of biological role, participates in the degradation of poly-3-hydroxybutyrate (PHB). It works downstream of poly(3-hydroxybutyrate) depolymerase, hydrolyzing D(-)-3-hydroxybutyrate oligomers of various length (3HB-oligomers) into 3HB-monomers. The sequence is that of D-(-)-3-hydroxybutyrate oligomer hydrolase from Burkholderia pseudomallei (strain 1106a).